The sequence spans 335 residues: Methionyl-tRNA formyltransferase (335 aa).

Residue 122-125 (SLLP) coordinates (6S)-5,6,7,8-tetrahydrofolate. The interval 203–222 (DSHGPLGEPQDPAKVSKAPR) is disordered.

This sequence belongs to the Fmt family.

It carries out the reaction L-methionyl-tRNA(fMet) + (6R)-10-formyltetrahydrofolate = N-formyl-L-methionyl-tRNA(fMet) + (6S)-5,6,7,8-tetrahydrofolate + H(+). In terms of biological role, attaches a formyl group to the free amino group of methionyl-tRNA(fMet). The formyl group appears to play a dual role in the initiator identity of N-formylmethionyl-tRNA by promoting its recognition by IF2 and preventing the misappropriation of this tRNA by the elongation apparatus. This chain is Methionyl-tRNA formyltransferase, found in Rhodopirellula baltica (strain DSM 10527 / NCIMB 13988 / SH1).